We begin with the raw amino-acid sequence, 407 residues long: Glycolate oxidase iron-sulfur subunit (407 aa).

4Fe-4S ferredoxin-type domains are found at residues 14–47 (RALE…ELDG) and 66–95 (LKTQ…HNLL). Positions 25, 28, 31, 35, 75, 78, 81, and 85 each coordinate [4Fe-4S] cluster.

In terms of assembly, the glycolate oxidase likely consists of three subunits, GlcD, GlcE and GlcF. [4Fe-4S] cluster is required as a cofactor.

The protein localises to the cell inner membrane. The enzyme catalyses glycolate + A = glyoxylate + AH2. It carries out the reaction (R)-lactate + A = pyruvate + AH2. Its activity is regulated as follows. In vitro the glycolate oxidase activity is inhibited by the sulfhydryl inhibitors CuSO4 and PCMB, by KCN, but not by the metal complexing agent EDTA. In terms of biological role, component of a complex that catalyzes the oxidation of glycolate to glyoxylate. Is required for E.coli to grow on glycolate as a sole source of carbon. Is also able to oxidize D-lactate ((R)-lactate) with a similar rate. Does not link directly to O(2), and 2,6-dichloroindophenol (DCIP) and phenazine methosulfate (PMS) can act as artificial electron acceptors in vitro, but the physiological molecule that functions as a primary electron acceptor during glycolate oxidation is unknown. This is Glycolate oxidase iron-sulfur subunit from Escherichia coli (strain K12).